Reading from the N-terminus, the 908-residue chain is Adhesion G-protein coupled receptor F1 (908 aa).

An N-terminal signal peptide occupies residues 1-20 (MRIGLLWLVPLFTLTEGTDG). The Extracellular portion of the chain corresponds to 21-588 (FLQQKNDGRR…VVPVVKWITY (568 aa)). 12 N-linked (GlcNAc...) asparagine glycosylation sites follow: asparagine 133, asparagine 167, asparagine 328, asparagine 353, asparagine 367, asparagine 388, asparagine 422, asparagine 453, asparagine 510, asparagine 519, asparagine 526, and asparagine 551. One can recognise an SEA domain in the interval 147 to 255 (ERAKVWGTFE…GSFRVFGKAP (109 aa)). A GAIN-B domain is found at 434-577 (PVTQIQSTRG…SMLMSPFVPS (144 aa)). 2 cysteine pairs are disulfide-bonded: cysteine 532–cysteine 559 and cysteine 547–cysteine 561. Positions 532-577 (CVFWDFSQLQWSNAGCQLVNETLDTVLCRCSHLTSFSMLMSPFVPS) are GPS. Residues 566 to 574 (SFSMLMSPF) form a stachel region. Residues 589–609 (IGLSISIASLILCLIIESLFW) form a helical membrane-spanning segment. Residues 610 to 622 (KQTKRSQTSYTRN) lie on the Cytoplasmic side of the membrane. A helical membrane pass occupies residues 623 to 643 (ICLVNIAVSLLIADVWFIIAA). Over 644-658 (TVDPSVSPSGVCVAA) the chain is Extracellular. Cysteine 655 and cysteine 731 are disulfide-bonded. The helical transmembrane segment at 659–679 (VFFTHFFYLAVFFWMLVLGIL) threads the bilayer. The Cytoplasmic portion of the chain corresponds to 680 to 697 (LAYRIILVFHHMALTTMM). Residues 698-718 (AIGFCLGYGCPLLISIITLAV) traverse the membrane as a helical segment. At 719 to 742 (TQPSNSYKRNDVCWLNWSDKSKPL) the chain is on the extracellular side. N-linked (GlcNAc...) asparagine glycosylation occurs at asparagine 734. The helical transmembrane segment at 743–763 (LAFVVPALTIVAVNLVVVLLV) threads the bilayer. Over 764-789 (LRKLWRPAVGERLNQDDKATAIRMGK) the chain is Cytoplasmic. Residues 790-810 (SLLVLTPLLGLTWGFGIGTMA) traverse the membrane as a helical segment. The Extracellular portion of the chain corresponds to 811 to 818 (NSHNLAWH). Residues 819–839 (VLFALLNAFQGFFIFCFGILL) form a helical membrane-spanning segment. Over 840–908 (DTKLRQLLSN…ITLTQFLSTE (69 aa)) the chain is Cytoplasmic.

The protein belongs to the G-protein coupled receptor 2 family. Adhesion G-protein coupled receptor (ADGR) subfamily. As to quaternary structure, heterodimer of 2 chains generated by proteolytic processing; the large extracellular N-terminal fragment and the membrane-bound C-terminal fragment predominantly remain associated and non-covalently linked. Autoproteolytically processed at the GPS region of the GAIN-B domain; this cleavage modulates receptor activity. In terms of tissue distribution, expressed in liver, kidney and adrenal gland. In kidney strong expression in the renal pelvis and the ureter.

It is found in the cell membrane. With respect to regulation, forms a heterodimer of 2 chains generated by proteolytic processing that remain associated through non-covalent interactions mediated by the GAIN-B domain. In the inactivated receptor, the Stachel sequence (also named stalk) is embedded in the GAIN-B domain, where it adopts a beta-strand conformation. On activation, the Stachel moves into the 7 transmembrane region and adopts a twisted hook-shaped configuration that forms contacts within the receptor, leading to coupling of a G-alpha protein, which activates signaling. The cleaved GAIN-B and N-terminal domains can then dissociate from the rest of the receptor. Adhesion G-protein coupled receptor (aGPCR) for N-docosahexaenoylethanolamine (synaptamide), an omega-3 fatty acid lipid highly enriched in the brain. Ligand binding causes a conformation change that triggers signaling via guanine nucleotide-binding proteins (G proteins) and modulates the activity of downstream effectors, such as adenylate cyclase. ADGRF1 is coupled to G(s) G proteins and mediates activation of adenylate cyclase activity. Also able to couple to G(q), G(i) and G(12)/G(13) G proteins; additional evidence is however required to confirm this result in vivo. Involved in the development of neurons and cognitive function. In liver, involved in fat accumulation. This is Adhesion G-protein coupled receptor F1 from Mus musculus (Mouse).